We begin with the raw amino-acid sequence, 340 residues long: Glyceraldehyde-3-phosphate dehydrogenase (340 aa).

NAD(+)-binding positions include 11–12 (SI) and glycine 111. 140–142 (SCN) lines the D-glyceraldehyde 3-phosphate pocket. Cysteine 141 (nucleophile) is an active-site residue. Arginine 169 serves as a coordination point for NAD(+). Position 195–196 (195–196 (HG)) interacts with D-glyceraldehyde 3-phosphate. Position 303 (glutamine 303) interacts with NAD(+).

The protein belongs to the glyceraldehyde-3-phosphate dehydrogenase family. Homotetramer.

It is found in the cytoplasm. The catalysed reaction is D-glyceraldehyde 3-phosphate + phosphate + NADP(+) = (2R)-3-phospho-glyceroyl phosphate + NADPH + H(+). It carries out the reaction D-glyceraldehyde 3-phosphate + phosphate + NAD(+) = (2R)-3-phospho-glyceroyl phosphate + NADH + H(+). The protein operates within carbohydrate degradation; glycolysis; pyruvate from D-glyceraldehyde 3-phosphate: step 1/5. In Methanococcus vannielii (strain ATCC 35089 / DSM 1224 / JCM 13029 / OCM 148 / SB), this protein is Glyceraldehyde-3-phosphate dehydrogenase.